The following is a 125-amino-acid chain: MHSRENNRKFKISKEIQRKIALILQQKINDPRIGISTVSGVDLSSDFSHAKIFVTFLNKNTKQQIKSGLFILNKASFFIRKILNKTMRLRIIPKLTFIYDYSLIKGRNIDDLFNNNIVKISKKSI.

The protein belongs to the RbfA family. Monomer. Binds 30S ribosomal subunits, but not 50S ribosomal subunits or 70S ribosomes.

It is found in the cytoplasm. Functionally, one of several proteins that assist in the late maturation steps of the functional core of the 30S ribosomal subunit. Associates with free 30S ribosomal subunits (but not with 30S subunits that are part of 70S ribosomes or polysomes). Required for efficient processing of 16S rRNA. May interact with the 5'-terminal helix region of 16S rRNA. This chain is Ribosome-binding factor A, found in Wigglesworthia glossinidia brevipalpis.